We begin with the raw amino-acid sequence, 288 residues long: MIAVTTESTADILPLQLGYSGIHLLPVPLGHQGQVYSERELPPDQLVNLIRTTGEPARTLAIDDEVVARTFEAALQGSKSGRLVHVASGSRFTPHFEVAARVAGQFGVRVQVIDGGTVSYALGVQALHAAHLADQGADFGQIARALAELRERTLLTFAVESLDFLRVNGRIGNVAAFIGNWLGLRPLLAVEAGEVVSKARVRGQAAAVRTLLSATHQFQHQTGETLRLYCGHTIGGEGAAEQLQGQLQAVYRDLPAPLHPLGSGLTANVGPGVVAVLAFPRRFGLGHA.

The 279-residue stretch at 2–280 (IAVTTESTAD…PGVVAVLAFP (279 aa)) folds into the DegV domain. Hexadecanoate is bound by residues Thr-59 and Thr-93.

May bind long-chain fatty acids, such as palmitate, and may play a role in lipid transport or fatty acid metabolism. This chain is DegV domain-containing protein DR_1903, found in Deinococcus radiodurans (strain ATCC 13939 / DSM 20539 / JCM 16871 / CCUG 27074 / LMG 4051 / NBRC 15346 / NCIMB 9279 / VKM B-1422 / R1).